We begin with the raw amino-acid sequence, 953 residues long: Valine--tRNA ligase (953 aa).

Positions 42 to 52 match the 'HIGH' region motif; sequence PNVTGSLHMGH. The short motif at 554–558 is the 'KMSKS' region element; that stretch reads KMSKS. Residue Lys-557 participates in ATP binding. A coiled-coil region spans residues 884–953; sequence LIDKDAELAR…EAQKETIAAL (70 aa).

The protein belongs to the class-I aminoacyl-tRNA synthetase family. ValS type 1 subfamily. In terms of assembly, monomer.

Its subcellular location is the cytoplasm. The enzyme catalyses tRNA(Val) + L-valine + ATP = L-valyl-tRNA(Val) + AMP + diphosphate. Its function is as follows. Catalyzes the attachment of valine to tRNA(Val). As ValRS can inadvertently accommodate and process structurally similar amino acids such as threonine, to avoid such errors, it has a 'posttransfer' editing activity that hydrolyzes mischarged Thr-tRNA(Val) in a tRNA-dependent manner. The sequence is that of Valine--tRNA ligase from Photobacterium profundum (strain SS9).